The chain runs to 282 residues: Phosphatidylglycerol--prolipoprotein diacylglyceryl transferase (282 aa).

4 consecutive transmembrane segments (helical) span residues 19–39, 59–79, 90–110, and 120–140; these read IGPITIRWYGLLIATAVLIGV, LSIWLVIGAIPAARIYYVLFQ, IIAIWQGGIAIHGAIIGGTLA, and VPFWQLADLVAPSLILGQAIG. An a 1,2-diacyl-sn-glycero-3-phospho-(1'-sn-glycerol)-binding site is contributed by arginine 141. The next 3 helical transmembrane spans lie at 181–201, 212–232, and 245–265; these read TFLYESIWDLMVFALLITLFF, VGTLFMVYLATYSLGRLWIEG, and IAQVVSLTGITLGLAGLAWLY.

Belongs to the Lgt family.

It localises to the cell inner membrane. It catalyses the reaction L-cysteinyl-[prolipoprotein] + a 1,2-diacyl-sn-glycero-3-phospho-(1'-sn-glycerol) = an S-1,2-diacyl-sn-glyceryl-L-cysteinyl-[prolipoprotein] + sn-glycerol 1-phosphate + H(+). It participates in protein modification; lipoprotein biosynthesis (diacylglyceryl transfer). In terms of biological role, catalyzes the transfer of the diacylglyceryl group from phosphatidylglycerol to the sulfhydryl group of the N-terminal cysteine of a prolipoprotein, the first step in the formation of mature lipoproteins. In Trichormus variabilis (strain ATCC 29413 / PCC 7937) (Anabaena variabilis), this protein is Phosphatidylglycerol--prolipoprotein diacylglyceryl transferase.